The primary structure comprises 368 residues: uncharacterized protein (368 aa).

Positions 1-19 (MHVSMIIFVSIFSIKYIMA) are cleaved as a signal peptide. N-linked (GlcNAc...) asparagine; by host glycans are attached at residues N99, N170, N266, and N295.

This is an uncharacterized protein from Ostreid herpesvirus 1 (isolate France) (OsHV-1).